The sequence spans 185 residues: ATP-dependent protease subunit HslV (185 aa).

Threonine 12 is a catalytic residue. Positions 168, 171, and 174 each coordinate Na(+).

It belongs to the peptidase T1B family. HslV subfamily. In terms of assembly, a double ring-shaped homohexamer of HslV is capped on each side by a ring-shaped HslU homohexamer. The assembly of the HslU/HslV complex is dependent on binding of ATP.

It localises to the cytoplasm. The enzyme catalyses ATP-dependent cleavage of peptide bonds with broad specificity.. With respect to regulation, allosterically activated by HslU binding. Protease subunit of a proteasome-like degradation complex believed to be a general protein degrading machinery. The protein is ATP-dependent protease subunit HslV of Jannaschia sp. (strain CCS1).